The chain runs to 93 residues: Co-chaperonin GroES (93 aa).

Belongs to the GroES chaperonin family. As to quaternary structure, heptamer of 7 subunits arranged in a ring. Interacts with the chaperonin GroEL.

It localises to the cytoplasm. Functionally, together with the chaperonin GroEL, plays an essential role in assisting protein folding. The GroEL-GroES system forms a nano-cage that allows encapsulation of the non-native substrate proteins and provides a physical environment optimized to promote and accelerate protein folding. GroES binds to the apical surface of the GroEL ring, thereby capping the opening of the GroEL channel. This chain is Co-chaperonin GroES, found in Geobacillus kaustophilus (strain HTA426).